A 420-amino-acid polypeptide reads, in one-letter code: Signal recognition particle receptor FtsY (420 aa).

The span at 28–62 (DLDRAMGKVAPDNKKTRDAKAAADARLAAEAEEAK) shows a compositional bias: basic and acidic residues. Residues 28–118 (DLDRAMGKVA…PETPESVGSR (91 aa)) are disordered. The segment covering 63–104 (AATAAEPAKSAESAKAEPAPAAQAEPEPAAAPKPESQPASKP) has biased composition (low complexity). GTP-binding positions include 227 to 234 (GVNGTGKT), 310 to 314 (DTAGR), and 372 to 375 (SKLD).

It belongs to the GTP-binding SRP family. FtsY subfamily. Part of the signal recognition particle protein translocation system, which is composed of SRP and FtsY.

The protein localises to the cell membrane. It localises to the cytoplasm. It catalyses the reaction GTP + H2O = GDP + phosphate + H(+). Its function is as follows. Involved in targeting and insertion of nascent membrane proteins into the cytoplasmic membrane. Acts as a receptor for the complex formed by the signal recognition particle (SRP) and the ribosome-nascent chain (RNC). The polypeptide is Signal recognition particle receptor FtsY (Bifidobacterium longum (strain NCC 2705)).